Here is a 694-residue protein sequence, read N- to C-terminus: 4-alpha-glucanotransferase (694 aa).

This sequence belongs to the disproportionating enzyme family.

The protein resides in the cytoplasm. It carries out the reaction Transfers a segment of a (1-&gt;4)-alpha-D-glucan to a new position in an acceptor, which may be glucose or a (1-&gt;4)-alpha-D-glucan.. The polypeptide is 4-alpha-glucanotransferase (malQ) (Escherichia coli (strain K12)).